A 513-amino-acid polypeptide reads, in one-letter code: GMP synthase [glutamine-hydrolyzing] (513 aa).

The Glutamine amidotransferase type-1 domain maps to 8-198 (MILVLDFGSQ…VFGVCDCEGK (191 aa)). The active-site Nucleophile is the Cys85. Catalysis depends on residues His172 and Glu174. The region spanning 199–388 (WSMENFIEIE…LGLPDDIVWR (190 aa)) is the GMPS ATP-PPase domain. 226–232 (SGGVDSS) serves as a coordination point for ATP.

As to quaternary structure, homodimer.

It carries out the reaction XMP + L-glutamine + ATP + H2O = GMP + L-glutamate + AMP + diphosphate + 2 H(+). The protein operates within purine metabolism; GMP biosynthesis; GMP from XMP (L-Gln route): step 1/1. Catalyzes the synthesis of GMP from XMP. The sequence is that of GMP synthase [glutamine-hydrolyzing] from Bacillus velezensis (strain DSM 23117 / BGSC 10A6 / LMG 26770 / FZB42) (Bacillus amyloliquefaciens subsp. plantarum).